The following is a 290-amino-acid chain: Type II secretion system protein C (290 aa).

Topologically, residues 1–28 are cytoplasmic; it reads MTLPFRNDLLSSLLARCKTVPLSRFSQP. A helical membrane pass occupies residues 29–46; the sequence is LFWLLLLLLAHQCAGLTW. Residues 47–290 lie on the Periplasmic side of the membrane; that stretch reads RLLDLGSQQA…LYDVYVGLSE (244 aa).

It belongs to the GSP C family.

The protein resides in the cell inner membrane. Its function is as follows. Involved in a type II secretion system (T2SS, formerly general secretion pathway, GSP) for the export of proteins. This is Type II secretion system protein C (exeC) from Aeromonas hydrophila.